The chain runs to 171 residues: Co-chaperone protein HscB homolog (171 aa).

Positions 2–74 constitute a J domain; the sequence is NHFELFGLPL…ISRAEYLLVQ (73 aa).

It belongs to the HscB family. Interacts with HscA and stimulates its ATPase activity.

Functionally, co-chaperone involved in the maturation of iron-sulfur cluster-containing proteins. Seems to help targeting proteins to be folded toward HscA. This Vibrio atlanticus (strain LGP32) (Vibrio splendidus (strain Mel32)) protein is Co-chaperone protein HscB homolog.